The following is a 398-amino-acid chain: MTLITEVRLRKILDSRGNPTVEAEVRTENGGFGRGAAPSGASTGEYEAVERPAEEAIAQARELAVPRIEGQVYAGDQRGVDNALHGADGTDDFSEIGANSAVAISMAAAKAAADVLGAPLYQHLGGAFRGRDFPVPLGNVIGGGEHAADATHIQEFLAAPVGAPSVADAVFANAKVHGEVQRQLDERGVPAAKGDEGAWAPSIDDSEAFEIMEEAIAAVEDEVGFEIRFGLDVAGAELYEDGVYHYGDETRSPDEQVAYIADLVEEYNLVYVEDPLDEDDFSGFAELTERVGDRTLICGDDLFVTNTERLQRGIDDGAANSILIKPNQIGTLSDAFDAIELATRNGYDPVVSHRSGETEDTTIAHLAVATDAPFIKTGAVGGERTAKLNELIRIEANA.

Q154 provides a ligand contact to (2R)-2-phosphoglycerate. Residue E196 is the Proton donor of the active site. D232, E273, and D300 together coordinate Mg(2+). (2R)-2-phosphoglycerate is bound by residues K325, R354, S355, and K376. The Proton acceptor role is filled by K325.

Belongs to the enolase family. Requires Mg(2+) as cofactor.

Its subcellular location is the cytoplasm. It localises to the secreted. The protein localises to the cell surface. The catalysed reaction is (2R)-2-phosphoglycerate = phosphoenolpyruvate + H2O. It participates in carbohydrate degradation; glycolysis; pyruvate from D-glyceraldehyde 3-phosphate: step 4/5. Functionally, catalyzes the reversible conversion of 2-phosphoglycerate (2-PG) into phosphoenolpyruvate (PEP). It is essential for the degradation of carbohydrates via glycolysis. This chain is Enolase, found in Natronomonas pharaonis (strain ATCC 35678 / DSM 2160 / CIP 103997 / JCM 8858 / NBRC 14720 / NCIMB 2260 / Gabara) (Halobacterium pharaonis).